The sequence spans 342 residues: MLETLRERLLSVQQDFTSGLKTLSDKSREAKAKNKPRTVPCLPKYSAGLELLSRYEDTWAALHRRAKECASAGERVDSEVVMLSAHWEKKQASLRDLQQQLQQLPGLIADLESLTASLTHLEASFEEVENHLLNLEDLCGQCELERHKHMQSQQLENYKKNKRKELETFKAELDAEHSQKVLEMEQTQQLKLKERQKFFEEAFQQDMEQYLSTGYLQIAERREPMGSMSSMEVNVDMLEQMDLMDISDQEALDVFLNSGGEENTLLSPISGPEASPGQDAVTLQVPTPSQAPATPPSSSSPGTDPASRDPSEGGESPVVQSDEEGVEVDTALATLHSDDSDS.

S11 carries the phosphoserine modification. The stretch at 83 to 180 forms a coiled coil; sequence LSAHWEKKQA…AELDAEHSQK (98 aa). The Nuclear export signal signature appears at 243–256; that stretch reads LMDISDQEALDVFL. Residues 263-342 are disordered; that stretch reads NTLLSPISGP…ATLHSDDSDS (80 aa). Residues 286–305 are compositionally biased toward low complexity; the sequence is PTPSQAPATPPSSSSPGTDP. Phosphoserine occurs at positions 316, 321, and 340.

Belongs to the dysbindin family. Interacts (via its coiled coil domain) with KXD1. Interacts with CMYA5, PI4K2 and RNF151. Component of the biogenesis of lysosome-related organelles complex 1 (BLOC-1) composed of at least BLOC1S1, BLOC1S2, BLOC1S3, BLOC1S4, BLOC1S5, BLOC1S6, DTNBP1/BLOC1S7 and SNAPIN/BLOC1S8. Interacts directly in the complex with BLOC1S5, BLOC1S6 and SNAPIN/BLOC1S8. The BLOC-1 complex associates with the AP-3 protein complex and membrane protein cargos. This BLOC-1 complex also associates with the BLOC-2 complex in endosomes. Binds to DTNA and DTNB but may not be a physiological binding partner. Interacts with the DNA-dependent protein kinase complex DNA-PK; the interaction phosphorylates DTNBP1 in vitro. Interacts directly in this complex with XRCC5 and XRCC6. Interacts with AP3M1, AP3B2 and TRIM32. Interacts with XPO1; the interaction exports DTNBP1 out of the nucleus. Ubiquitinated by TRIM32. Ubiquitination leads to DTNBP1 degradation.

The protein localises to the cytoplasm. The protein resides in the cytoplasmic vesicle membrane. Its subcellular location is the cytoplasmic vesicle. It localises to the secretory vesicle. It is found in the synaptic vesicle membrane. The protein localises to the endosome membrane. The protein resides in the melanosome membrane. Its subcellular location is the nucleus. It localises to the postsynaptic density. It is found in the presynaptic cell membrane. The protein localises to the endoplasmic reticulum. Component of the BLOC-1 complex, a complex that is required for normal biogenesis of lysosome-related organelles (LRO), such as platelet dense granules and melanosomes. In concert with the AP-3 complex, the BLOC-1 complex is required to target membrane protein cargos into vesicles assembled at cell bodies for delivery into neurites and nerve terminals. The BLOC-1 complex, in association with SNARE proteins, is also proposed to be involved in neurite extension. Associates with the BLOC-2 complex to facilitate the transport of TYRP1 independent of AP-3 function. Plays a role in synaptic vesicle trafficking and in neurotransmitter release. Plays a role in the regulation of cell surface exposure of DRD2. May play a role in actin cytoskeleton reorganization and neurite outgrowth. May modulate MAPK8 phosphorylation. Appears to promote neuronal transmission and viability through regulating the expression of SNAP25 and SYN1, modulating PI3-kinase-Akt signaling and influencing glutamatergic release. Regulates the expression of SYN1 through binding to its promoter. Modulates prefrontal cortical activity via the dopamine/D2 pathway. The protein is Dysbindin (DTNBP1) of Bos taurus (Bovine).